The chain runs to 184 residues: Protein GrpE (184 aa).

The protein belongs to the GrpE family. Homodimer.

It is found in the cytoplasm. Functionally, participates actively in the response to hyperosmotic and heat shock by preventing the aggregation of stress-denatured proteins, in association with DnaK and GrpE. It is the nucleotide exchange factor for DnaK and may function as a thermosensor. Unfolded proteins bind initially to DnaJ; upon interaction with the DnaJ-bound protein, DnaK hydrolyzes its bound ATP, resulting in the formation of a stable complex. GrpE releases ADP from DnaK; ATP binding to DnaK triggers the release of the substrate protein, thus completing the reaction cycle. Several rounds of ATP-dependent interactions between DnaJ, DnaK and GrpE are required for fully efficient folding. This chain is Protein GrpE, found in Pseudomonas putida (strain GB-1).